A 242-amino-acid polypeptide reads, in one-letter code: Pyridoxine 5'-phosphate synthase (242 aa).

N9 is a binding site for 3-amino-2-oxopropyl phosphate. A 1-deoxy-D-xylulose 5-phosphate-binding site is contributed by 11-12 (DH). Residue R20 participates in 3-amino-2-oxopropyl phosphate binding. The active-site Proton acceptor is H45. The 1-deoxy-D-xylulose 5-phosphate site is built by R47 and H52. E72 serves as the catalytic Proton acceptor. T102 contacts 1-deoxy-D-xylulose 5-phosphate. H193 acts as the Proton donor in catalysis. 3-amino-2-oxopropyl phosphate-binding positions include G194 and 215–216 (GH).

It belongs to the PNP synthase family. Homooctamer; tetramer of dimers.

It localises to the cytoplasm. It carries out the reaction 3-amino-2-oxopropyl phosphate + 1-deoxy-D-xylulose 5-phosphate = pyridoxine 5'-phosphate + phosphate + 2 H2O + H(+). Its pathway is cofactor biosynthesis; pyridoxine 5'-phosphate biosynthesis; pyridoxine 5'-phosphate from D-erythrose 4-phosphate: step 5/5. Catalyzes the complicated ring closure reaction between the two acyclic compounds 1-deoxy-D-xylulose-5-phosphate (DXP) and 3-amino-2-oxopropyl phosphate (1-amino-acetone-3-phosphate or AAP) to form pyridoxine 5'-phosphate (PNP) and inorganic phosphate. The sequence is that of Pyridoxine 5'-phosphate synthase from Idiomarina loihiensis (strain ATCC BAA-735 / DSM 15497 / L2-TR).